We begin with the raw amino-acid sequence, 761 residues long: Isocyanide synthase xanB (761 aa).

The tract at residues 24-128 (LLGSYETKAP…GKGTKADPSH (105 aa)) is disordered. The span at 36 to 48 (ETSEIAASSSSSE) shows a compositional bias: low complexity. Over residues 93–102 (TVSTPQSSDN) the composition is skewed to polar residues. Over residues 115-126 (FKDEGKGTKADP) the composition is skewed to basic and acidic residues.

The protein belongs to the isocyanide synthase family.

The protein operates within secondary metabolite biosynthesis. Isocyanide synthase; part of the gene cluster that mediates the biosynthesis of the isocyanide xanthocillin and its derivatives. The first step of the pathway consists in the conversion of tyrosine into a vinyl-isonitrile intermediate by the isocyanide synthase xanB. Subsequent oxidative dimerization of this intermediate to form xanthocillin may involve the cytochrome P450 monooxygenase xanG, whose expression is coregulated with that of XanB. Xanthocillin can be further modified by the isonitrile hydratase-like protein xanA which introduces N-formyl groups and the methyltransferase xanE which introduces methyl groups, leading to the production of several derivatives including fumiformamide. Finally, fumiformamide can be subject to both oxidative and reductive cyclization to yield melanocins E and F, respectively. The protein is Isocyanide synthase xanB of Aspergillus fumigatus (strain ATCC MYA-4609 / CBS 101355 / FGSC A1100 / Af293) (Neosartorya fumigata).